Here is a 457-residue protein sequence, read N- to C-terminus: Cysteine--tRNA ligase (457 aa).

Position 28 (Cys-28) interacts with Zn(2+). Residues 30 to 40 carry the 'HIGH' region motif; sequence PTVYDTAHIGN. Cys-212, His-237, and Glu-241 together coordinate Zn(2+). Residues 270 to 274 carry the 'KMSKS' region motif; sequence KMSKS. Lys-273 contacts ATP.

This sequence belongs to the class-I aminoacyl-tRNA synthetase family. As to quaternary structure, monomer. Zn(2+) is required as a cofactor.

Its subcellular location is the cytoplasm. It catalyses the reaction tRNA(Cys) + L-cysteine + ATP = L-cysteinyl-tRNA(Cys) + AMP + diphosphate. The chain is Cysteine--tRNA ligase from Wolbachia sp. subsp. Drosophila simulans (strain wRi).